A 155-amino-acid polypeptide reads, in one-letter code: uncharacterized protein (155 aa).

2 disordered regions span residues 1-22 (MSSQKGNVTRSRPQKHQNTFTF) and 110-155 (NKEP…DTQA). Ser-2 is subject to N-acetylserine. 3 positions are modified to phosphoserine: Ser-136, Ser-144, and Ser-146. The span at 136-155 (SDEDLDAESDSDGEDGDTQA) shows a compositional bias: acidic residues.

This is an uncharacterized protein from Mus musculus (Mouse).